The primary structure comprises 294 residues: 4-hydroxy-tetrahydrodipicolinate synthase (294 aa).

Thr-44 is a binding site for pyruvate. Tyr-132 functions as the Proton donor/acceptor in the catalytic mechanism. Lys-161 functions as the Schiff-base intermediate with substrate in the catalytic mechanism. Ile-206 lines the pyruvate pocket.

Belongs to the DapA family. In terms of assembly, homotetramer; dimer of dimers.

The protein localises to the cytoplasm. The catalysed reaction is L-aspartate 4-semialdehyde + pyruvate = (2S,4S)-4-hydroxy-2,3,4,5-tetrahydrodipicolinate + H2O + H(+). It functions in the pathway amino-acid biosynthesis; L-lysine biosynthesis via DAP pathway; (S)-tetrahydrodipicolinate from L-aspartate: step 3/4. With respect to regulation, is not inhibited by (S)-lysine, in contrast to E.coli DapA. Catalyzes the condensation of (S)-aspartate-beta-semialdehyde [(S)-ASA] and pyruvate to 4-hydroxy-tetrahydrodipicolinate (HTPA). This is 4-hydroxy-tetrahydrodipicolinate synthase from Thermotoga maritima (strain ATCC 43589 / DSM 3109 / JCM 10099 / NBRC 100826 / MSB8).